Reading from the N-terminus, the 201-residue chain is Probable nicotinate-nucleotide adenylyltransferase (201 aa).

It belongs to the NadD family.

The enzyme catalyses nicotinate beta-D-ribonucleotide + ATP + H(+) = deamido-NAD(+) + diphosphate. The protein operates within cofactor biosynthesis; NAD(+) biosynthesis; deamido-NAD(+) from nicotinate D-ribonucleotide: step 1/1. Catalyzes the reversible adenylation of nicotinate mononucleotide (NaMN) to nicotinic acid adenine dinucleotide (NaAD). This chain is Probable nicotinate-nucleotide adenylyltransferase, found in Clostridium botulinum (strain Okra / Type B1).